A 274-amino-acid chain; its full sequence is Long chain fatty acid elongase 2 (274 aa).

7 consecutive transmembrane segments (helical) span residues 29-49, 73-93, 115-135, 140-160, 170-190, 201-221, and 238-258; these read MSTF…TIYF, FSLF…GVFM, FWGW…MFLV, PVIF…VVTY, SLAL…VRAL, FITT…GHLV, and VLSI…KFFY.

Belongs to the ELO family. Expressed in various tissues and parts of the body, including the ventral cord, pharyngeal muscles, uterus, and the tail, and most strongly in intestinal cells.

It localises to the membrane. The enzyme catalyses hexadecanoyl-CoA + malonyl-CoA + H(+) = 3-oxooctadecanoyl-CoA + CO2 + CoA. It participates in lipid metabolism; fatty acid biosynthesis. In terms of biological role, catalyzes the first and rate-limiting reaction of the four reactions that constitute the long-chain fatty acids elongation cycle. Uses malonyl-CoA to add 2 carbons per cycle to the chain of long-chain fatty acids. Condensing enzyme responsible for the elongation of palmitate (hexadecanoate, 16:0), also involved in polyunsaturated fatty acid (PUFA) biosynthesis. This Caenorhabditis elegans protein is Long chain fatty acid elongase 2.